We begin with the raw amino-acid sequence, 387 residues long: Fetuin-B (387 aa).

Residues 1–18 (MNVLLLLVLCTLAMGCGA) form the signal peptide. 2 Cystatin fetuin-B-type domains span residues 25-139 (AARP…YNCT) and 150-258 (MTCP…VTCS). Residue Asn37 is glycosylated (N-linked (GlcNAc...) asparagine). 5 disulfide bridges follow: Cys94–Cys105, Cys118–Cys138, Cys152–Cys155, Cys217–Cys225, and Cys238–Cys257. N-linked (GlcNAc...) asparagine glycosylation is present at Asn137. Residues 264-306 (APTPRGENATVNQRPANPSKTEELQQQNTAPTNSPTKAVPKGS) form a disordered region. The N-linked (GlcNAc...) asparagine glycan is linked to Asn271. The segment covering 272 to 299 (ATVNQRPANPSKTEELQQQNTAPTNSPT) has biased composition (polar residues). O-linked (GalNAc...) threonine glycosylation is found at Thr292 and Thr295. Ser320 carries the phosphoserine modification. A disordered region spans residues 366 to 387 (KEQRSAECPGPAQKGYPFILPS).

Belongs to the fetuin family. As to expression, liver and testis.

The protein localises to the secreted. In terms of biological role, protease inhibitor required for egg fertilization. Required to prevent premature zona pellucida hardening before fertilization, probably by inhibiting the protease activity of ASTL, a protease that mediates the cleavage of ZP2 and triggers zona pellucida hardening. In Bos taurus (Bovine), this protein is Fetuin-B (FETUB).